Reading from the N-terminus, the 517-residue chain is Benzoate 4-monooxygenase bphA (517 aa).

Residues 4–24 (LLLSPYGAYLGLALLVLYYLL) traverse the membrane as a helical segment. N-linked (GlcNAc...) asparagine glycans are attached at residues asparagine 282 and asparagine 325. A heme-binding site is contributed by cysteine 461.

The protein belongs to the cytochrome P450 family. Requires heme as cofactor.

The protein localises to the membrane. The enzyme catalyses benzoate + reduced [NADPH--hemoprotein reductase] + O2 = 4-hydroxybenzoate + oxidized [NADPH--hemoprotein reductase] + H2O + H(+). In terms of biological role, cytochrome P450 monooxygenase; part of the benzoic acid degradation pathway also known as the protocatechuic acid pathway. Benzoic acid debradation begins with the conversion of benzoic acid into 4-hydroxybenzoic acid through hydroxylation by the benzoate-4-monooxygenase bphA, and its partner NADPH-cytochrome P450 reductase cprA which act as a mediator in electron donation from NADPH. 4-Hydroxybenzoic acid is then converted into 3,4-dihydroxybenzoic acid (also called protocatechuic acid) by the p-hydroxybenzoate-m-hydroxylase phhA. Protocatechuic acid is converted into 3-carboxy-cis,cis-muconic acid by the intradiol ring-cleavage dioxygenase prcA, which is further metabolized through the 3-oxoadipate pathway to finally enter the tricarboxylic acid cycle (TCA). Its function is as follows. Responsible for cytochrome P450 dependent benzoate hydroxylation in microsomes; requires cprA as the mediator in electron donation from NADPH. The sequence is that of Benzoate 4-monooxygenase bphA from Aspergillus niger.